A 144-amino-acid polypeptide reads, in one-letter code: Grifin (144 aa).

The region spanning Ser-5–Ala-133 is the Galectin domain. Ser-138 is subject to Phosphoserine.

Homodimer. As to expression, not detected in lens.

The protein is Grifin (GRIFIN) of Homo sapiens (Human).